A 731-amino-acid chain; its full sequence is Probable G-protein coupled receptor 149 (731 aa).

At 1 to 35 the chain is on the extracellular side; it reads MSLFLSNLSTNDSSLWKENHNSTDLLNPPGTLNIY. N-linked (GlcNAc...) asparagine glycans are attached at residues Asn7, Asn11, and Asn21. The chain crosses the membrane as a helical span at residues 36 to 56; sequence LFCLTCLMTFAALVGSIYSLI. At 57–69 the chain is on the cytoplasmic side; it reads SLLKMQNRTVVSM. The helical transmembrane segment at 70-90 threads the bilayer; the sequence is LVASWSVDDLMSVLSVTIFMF. The Extracellular segment spans residues 91–109; that stretch reads LQWPNEVPGYFQFLCTTSA. A disulfide bond links Cys105 and Cys182. The chain crosses the membrane as a helical span at residues 110-132; the sequence is LMYLCQGLSSNLKATLLVSYNFY. Residues 133–155 are Cytoplasmic-facing; the sequence is TMHRGVGSQTASRRSGQVLGVVL. A helical transmembrane segment spans residues 156–176; the sequence is TVWAASLLLSALPLCGWGAFV. Over 177–189 the chain is Extracellular; sequence RTPWGCLVDCSSS. The helical transmembrane segment at 190–210 threads the bilayer; it reads YVLFLSIVYALAFGLLVGLSV. Over 211–310 the chain is Cytoplasmic; it reads PLTHRLLCSE…SFTVSVAQKR (100 aa). The disordered stretch occupies residues 234 to 271; it reads RGASIPGTPPTAGRVVSLSPEDAPGPSLRRSGGCSPSS. The helical transmembrane segment at 311-331 threads the bilayer; sequence FALILALTKVVLWLPMMMHMV. At 332–342 the chain is on the extracellular side; the sequence is VQNVVGFQSLP. A helical membrane pass occupies residues 343-363; sequence LETFSFLLTLLATTVTPVFVL. Over 364-731 the chain is Cytoplasmic; the sequence is SKRWTHLPCG…RKREEESKGS (368 aa). A disordered region spans residues 475–526; the sequence is NTDITEAKQDSNNKKDAFSDKTGGDINYEETTFSEGPERRLSHEESQKPDLS. Composition is skewed to basic and acidic residues over residues 479 to 497 and 510 to 526; these read TEAKQDSNNKKDAFSDKTG and GPERRLSHEESQKPDLS.

It belongs to the G-protein coupled receptor 1 family.

Its subcellular location is the cell membrane. In terms of biological role, orphan receptor. In Homo sapiens (Human), this protein is Probable G-protein coupled receptor 149 (GPR149).